Here is a 268-residue protein sequence, read N- to C-terminus: Tryptophan synthase alpha chain (268 aa).

Residues Glu-49 and Asp-60 each act as proton acceptor in the active site.

It belongs to the TrpA family. As to quaternary structure, tetramer of two alpha and two beta chains.

The enzyme catalyses (1S,2R)-1-C-(indol-3-yl)glycerol 3-phosphate + L-serine = D-glyceraldehyde 3-phosphate + L-tryptophan + H2O. Its pathway is amino-acid biosynthesis; L-tryptophan biosynthesis; L-tryptophan from chorismate: step 5/5. The alpha subunit is responsible for the aldol cleavage of indoleglycerol phosphate to indole and glyceraldehyde 3-phosphate. The protein is Tryptophan synthase alpha chain of Pseudomonas aeruginosa (strain UCBPP-PA14).